The chain runs to 557 residues: 2,3-bisphosphoglycerate-independent phosphoglycerate mutase 1 (557 aa).

Aspartate 27 and serine 80 together coordinate Mn(2+). Serine 80 serves as the catalytic Phosphoserine intermediate. Substrate is bound by residues histidine 139, 169 to 170 (RD), arginine 205, arginine 212, 285 to 288 (RADR), and lysine 360. Residues aspartate 429, histidine 433, aspartate 470, histidine 471, and histidine 500 each coordinate Mn(2+).

This sequence belongs to the BPG-independent phosphoglycerate mutase family. In terms of assembly, monomer. Requires Mn(2+) as cofactor.

The protein localises to the cytoplasm. It carries out the reaction (2R)-2-phosphoglycerate = (2R)-3-phosphoglycerate. Its pathway is carbohydrate degradation; glycolysis; pyruvate from D-glyceraldehyde 3-phosphate: step 3/5. Functionally, catalyzes the interconversion of 2-phosphoglycerate (2-PGA) and 3-phosphoglycerate (3-PGA). Required for guard cell function (e.g. blue light-, abscisic acid- (ABA), and low CO(2)-regulated stomatal movements) and fertility (e.g. pollen grains production). The chain is 2,3-bisphosphoglycerate-independent phosphoglycerate mutase 1 (PGM1) from Arabidopsis thaliana (Mouse-ear cress).